The primary structure comprises 338 residues: tRNA N6-adenosine threonylcarbamoyltransferase (338 aa).

Residues H111 and H115 each coordinate Fe cation. Substrate contacts are provided by residues L133–G137, D166, G179, D183, and N275. Residue D300 coordinates Fe cation.

The protein belongs to the KAE1 / TsaD family. Fe(2+) serves as cofactor.

Its subcellular location is the cytoplasm. The enzyme catalyses L-threonylcarbamoyladenylate + adenosine(37) in tRNA = N(6)-L-threonylcarbamoyladenosine(37) in tRNA + AMP + H(+). Required for the formation of a threonylcarbamoyl group on adenosine at position 37 (t(6)A37) in tRNAs that read codons beginning with adenine. Is involved in the transfer of the threonylcarbamoyl moiety of threonylcarbamoyl-AMP (TC-AMP) to the N6 group of A37, together with TsaE and TsaB. TsaD likely plays a direct catalytic role in this reaction. In Treponema denticola (strain ATCC 35405 / DSM 14222 / CIP 103919 / JCM 8153 / KCTC 15104), this protein is tRNA N6-adenosine threonylcarbamoyltransferase.